The sequence spans 92 residues: Large ribosomal subunit protein eL31 (92 aa).

Position 2 is an N-acetylserine (Ser-2).

This sequence belongs to the eukaryotic ribosomal protein eL31 family. In terms of assembly, part of the 50S ribosomal subunit.

Functionally, binds to the 23S rRNA. Located at the polypeptide exit tunnel on the outside of the subunit. This is Large ribosomal subunit protein eL31 (rpl31e) from Haloarcula marismortui (strain ATCC 43049 / DSM 3752 / JCM 8966 / VKM B-1809) (Halobacterium marismortui).